The following is a 382-amino-acid chain: MKVPKTMLLSTAAGLLLSLTATSVSAHYVNEEHHFKVTAHTETDPVASGDDAADDPAIWVHEKHPEKSKLITTNKKSGLVVYDLDGKQLHSYEFGKLNNVDLRYDFPLNGEKIDIAAASNRSEGKNTIEVYAIDGDKGKLKSITDPNHPISTNISEVYGFSLYHSQKTGAFYALVTGKQGEFEQYEIVDGGKGYVTGKKVREFKLNSQTEGLVADDEYGNLYIAEEDEAIWKFNAEPGGGSKGQVVDRATGDHLTADIEGLTIYYAPNGKGYLMASSQGNNSYAMYERQGKNRYVANFEITDGEKIDGTSDTDGIDVLGFGLGPKYPYGIFVAQDGENIDNGQAVNQNFKIVSWEQIAQHLGEMPDLHKQVNPRKLKDRSDG.

The signal sequence occupies residues 1 to 26; sequence MKVPKTMLLSTAAGLLLSLTATSVSA. Positions 27–361 constitute a BPP domain; that stretch reads HYVNEEHHFK…VSWEQIAQHL (335 aa).

The protein resides in the secreted. The enzyme catalyses 1D-myo-inositol hexakisphosphate + H2O = 1D-myo-inositol 1,2,4,5,6-pentakisphosphate + phosphate. This chain is 3-phytase (phy), found in Bacillus subtilis (strain 168).